Reading from the N-terminus, the 139-residue chain is MAHPCATDPELWFGYPDDDGSDGAAKARAYERSATQARIQCLRRCPLLQQRRCAQHAVEHRVEYGVWAGIKLPGGQYRKREQLAAAHDVLRRIAGGEINSRQLPDNAALLARNEGLEVTPVPGVVVHLPIAQVGPQPAA.

The 4Fe-4S Wbl-type domain maps to 4–77 (PCATDPELWF…AGIKLPGGQY (74 aa)). Residues Cys5, Cys41, Cys45, and Cys53 each contribute to the [4Fe-4S] cluster site.

The protein belongs to the WhiB family. The cofactor is [4Fe-4S] cluster. Post-translationally, the Fe-S cluster can be nitrosylated by nitric oxide (NO). Upon Fe-S cluster removal intramolecular disulfide bonds are formed.

It is found in the cytoplasm. Functionally, a transcription factor that is probably redox-responsive. Probably plays a role in immunomodulation and reactivation after chronic infection. Its induction results in transcription of a number of genes including sigM, and the genes for 2 type VII secretion systems ESX-2 and ESX-4. Seems to negatively regulate its own expression. The apo-form has been shown to act as a protein disulfide reductase. The apo- but not holo-form probably binds DNA. The polypeptide is Transcriptional regulator WhiB5 (whiB5) (Mycobacterium tuberculosis (strain ATCC 25618 / H37Rv)).